The primary structure comprises 212 residues: Large ribosomal subunit protein uL3 (212 aa).

The disordered stretch occupies residues 136 to 155 (THGNSLSHRSNGSIGQNQTP). Position 153 is an N5-methylglutamine (Gln153).

It belongs to the universal ribosomal protein uL3 family. Part of the 50S ribosomal subunit. Forms a cluster with proteins L14 and L19. In terms of processing, methylated by PrmB.

Functionally, one of the primary rRNA binding proteins, it binds directly near the 3'-end of the 23S rRNA, where it nucleates assembly of the 50S subunit. This is Large ribosomal subunit protein uL3 from Shewanella oneidensis (strain ATCC 700550 / JCM 31522 / CIP 106686 / LMG 19005 / NCIMB 14063 / MR-1).